The sequence spans 1038 residues: Kinesin-like protein KIN-5B (1038 aa).

The tract at residues 1–63 (MAQTPNPSRR…GGGGGGGSEM (63 aa)) is disordered. Residues 24-34 (RPERRQLELRW) show a composition bias toward basic and acidic residues. Over residues 49 to 61 (GLTGGGGGGGGGS) the composition is skewed to gly residues. The Kinesin motor domain maps to 69–410 (NVQVVLRCRP…LDYAYRAKSI (342 aa)). 154 to 161 (GQTGTGKT) is an ATP binding site. A coiled-coil region spans residues 453-502 (QERFALEEAEKKTMRDKIEYLETQNKELKMNIESCKKEYLDLEEAHSRAN). Positions 1013-1038 (DKGKRYVDQGTRTPRSPLMPVNHYNK) are disordered.

This sequence belongs to the TRAFAC class myosin-kinesin ATPase superfamily. Kinesin family. KIN-5/BimC subfamily.

It localises to the cytoplasm. The protein localises to the cytoskeleton. The protein resides in the spindle. Its function is as follows. Responsible for microtubule translocation. May be important for the organization of phragmoplast-specific arrays of microtubules. Plays an essential role in stabilizing the mitotic spindle. Required during mitotic cytokinesis. This is Kinesin-like protein KIN-5B from Oryza sativa subsp. japonica (Rice).